A 210-amino-acid chain; its full sequence is Large ribosomal subunit protein uL3 (210 aa).

Residues 125-151 form a disordered region; that stretch reads RHGQSRGPMSHGSRYHRRPGSMGPVAP.

This sequence belongs to the universal ribosomal protein uL3 family. As to quaternary structure, part of the 50S ribosomal subunit. Forms a cluster with proteins L14 and L19.

In terms of biological role, one of the primary rRNA binding proteins, it binds directly near the 3'-end of the 23S rRNA, where it nucleates assembly of the 50S subunit. This is Large ribosomal subunit protein uL3 from Bacillus mycoides (strain KBAB4) (Bacillus weihenstephanensis).